The primary structure comprises 370 residues: NSFL1 cofactor p47 (370 aa).

The segment covering 54–73 (SQATPSSVSRGTAPSDNRVT) has biased composition (polar residues). Residues 54–116 (SQATPSSVSR…VGPPRKKSPN (63 aa)) are disordered. Phosphoserine is present on residues S74, S102, S114, and S140. Positions 109-115 (PPRKKSP) match the Nuclear localization signal motif. Y167 carries the post-translational modification Phosphotyrosine. Residues 172 to 175 (KRQH) carry the Nuclear localization signal motif. S176, S192, and S272 each carry phosphoserine. One can recognise an SEP domain in the interval 179-244 (DVHVVLKLWK…MEDHRDEDFV (66 aa)). A compositionally biased stretch (polar residues) spans 261–287 (GSTAPQVLSTSSPAQQAENEAKASSSI). A disordered region spans residues 261 to 289 (GSTAPQVLSTSSPAQQAENEAKASSSILI). Positions 291-368 (ESEPTTNIQI…NLLNAVIVQR (78 aa)) constitute a UBX domain.

This sequence belongs to the NSFL1C family. As to quaternary structure, part of a ternary complex containing STX5A, NSFL1C and VCP. NSFL1C forms a homotrimer that binds to one end of a VCP homohexamer. The complex binds to membranes enriched in phosphatidylethanolamine-containing lipids and promotes Golgi membrane fusion. Interaction with VCIP135 leads to dissociation of the complex via ATP hydrolysis by VCP. Binds ubiquitin and mono-ubiquitinated proteins via its N-terminal UBA-like domain when bound to VCP. Phosphorylated during mitosis. Phosphorylation inhibits interaction with Golgi membranes and is required for the fragmentation of the Golgi stacks during mitosis.

The protein localises to the nucleus. It is found in the golgi apparatus. It localises to the golgi stack. The protein resides in the chromosome. Its subcellular location is the cytoplasm. The protein localises to the cytoskeleton. It is found in the microtubule organizing center. It localises to the centrosome. Reduces the ATPase activity of VCP. Necessary for the fragmentation of Golgi stacks during mitosis and for VCP-mediated reassembly of Golgi stacks after mitosis. May play a role in VCP-mediated formation of transitional endoplasmic reticulum (tER). Inhibits the activity of CTSL (in vitro). Together with UBXN2B/p37, regulates the centrosomal levels of kinase AURKA/Aurora A during mitotic progression by promoting AURKA removal from centrosomes in prophase. Also, regulates spindle orientation during mitosis. This is NSFL1 cofactor p47 (NSFL1C) from Homo sapiens (Human).